The following is a 295-amino-acid chain: Pyridoxal 5'-phosphate synthase subunit PdxS (295 aa).

Residue D23 participates in D-ribose 5-phosphate binding. The active-site Schiff-base intermediate with D-ribose 5-phosphate is K80. D-ribose 5-phosphate is bound at residue G152. R164 is a D-glyceraldehyde 3-phosphate binding site. Residues G213 and 234-235 (GS) each bind D-ribose 5-phosphate.

This sequence belongs to the PdxS/SNZ family. In the presence of PdxT, forms a dodecamer of heterodimers.

The catalysed reaction is aldehydo-D-ribose 5-phosphate + D-glyceraldehyde 3-phosphate + L-glutamine = pyridoxal 5'-phosphate + L-glutamate + phosphate + 3 H2O + H(+). It functions in the pathway cofactor biosynthesis; pyridoxal 5'-phosphate biosynthesis. Functionally, catalyzes the formation of pyridoxal 5'-phosphate from ribose 5-phosphate (RBP), glyceraldehyde 3-phosphate (G3P) and ammonia. The ammonia is provided by the PdxT subunit. Can also use ribulose 5-phosphate and dihydroxyacetone phosphate as substrates, resulting from enzyme-catalyzed isomerization of RBP and G3P, respectively. The chain is Pyridoxal 5'-phosphate synthase subunit PdxS from Methanopyrus kandleri (strain AV19 / DSM 6324 / JCM 9639 / NBRC 100938).